The sequence spans 178 residues: Caveolin-1 (178 aa).

S2 carries the N-acetylserine modification. At S2 the chain carries Phosphoserine. Residues 2-94 form a required for homooligomerization region; sequence SGGKYVDSEG…WKASFTTFTV (93 aa). Topologically, residues 2–104 are cytoplasmic; it reads SGGKYVDSEG…TKYWFYRLLS (103 aa). The residue at position 5 (K5) is an N6-acetyllysine; alternate. K5 is covalently cross-linked (Glycyl lysine isopeptide (Lys-Gly) (interchain with G-Cter in ubiquitin); alternate). A Phosphotyrosine modification is found at Y6. A Phosphoserine modification is found at S9. Position 14 is a phosphotyrosine; by ABL1 (Y14). A Phosphotyrosine modification is found at Y25. Residues K26, K30, K39, K47, and K57 each participate in a glycyl lysine isopeptide (Lys-Gly) (interchain with G-Cter in ubiquitin) cross-link. An interaction with CAVIN3 region spans residues 82–94; the sequence is DGIWKASFTTFTV. The segment at residues 105–125 is an intramembrane region (helical); it reads ALFGIPMALIWGIYFAILSFL. Over 126 to 178 the chain is Cytoplasmic; that stretch reads HIWAVVPCIKSFLIEIQCVSRVYSIYVHTFCDPFFEAVGKIFSSIRINMQKEI. The interacts with SPRY1, SPRY2, SPRY3 and SPRY4 stretch occupies residues 131-142; that stretch reads VPCIKSFLIEIQ. Residues C133, C143, and C156 are each lipidated (S-palmitoyl cysteine). Residues 149 to 160 are interacts with SPRY1, SPRY2, and SPRY4; sequence SIYVHTFCDPFF. The segment at 167–178 is interacts with SPRY1, SPRY2, SPRY3 and SPRY4; the sequence is FSSIRINMQKEI.

The protein belongs to the caveolin family. In terms of assembly, homooligomer. Interacts with GLIPR2. Interacts with NOSTRIN. Interacts with SNAP25 and STX1A. Interacts (via the N-terminus) with DPP4; the interaction is direct. Interacts with CTNNB1, CDH1 and JUP. Interacts with PACSIN2; this interaction induces membrane tubulation. Interacts with SLC7A9. Interacts with BMX and BTK. Interacts with TGFBR1. Interacts with CAVIN3 (via leucine-zipper domain) in a cholesterol-sensitive manner. Interacts with CAVIN1. Interacts with EHD2 in a cholesterol-dependent manner. Forms a ternary complex with UBXN6 and VCP; mediates CAV1 targeting to lysosomes for degradation. Interacts with ABCG1; this interaction regulates ABCG1-mediated cholesterol efflux. Interacts with NEU3; this interaction enhances NEU3 sialidase activity within caveola. Interacts (via C-terminus) with SPRY1, SPRY2 (via C-terminus), SPRY3, and SPRY4. Interacts with IGFBP5; this interaction allows trafficking of IGFBP5 from the plasma membrane to the nucleus. In terms of processing, phosphorylated at Tyr-14 by ABL1 in response to oxidative stress. Ubiquitinated. Undergo monoubiquitination and multi- and/or polyubiquitination. Monoubiquitination of N-terminal lysines promotes integration in a ternary complex with UBXN6 and VCP which promotes oligomeric CAV1 targeting to lysosomes for degradation. Ubiquitinated by ZNRF1; leading to degradation and modulation of the TLR4-mediated immune response.

It localises to the golgi apparatus membrane. The protein localises to the cell membrane. The protein resides in the membrane. Its subcellular location is the caveola. It is found in the membrane raft. Its function is as follows. May act as a scaffolding protein within caveolar membranes. Forms a stable heterooligomeric complex with CAV2 that targets to lipid rafts and drives caveolae formation. Mediates the recruitment of CAVIN proteins (CAVIN1/2/3/4) to the caveolae. Interacts directly with G-protein alpha subunits and can functionally regulate their activity. Involved in the costimulatory signal essential for T-cell receptor (TCR)-mediated T-cell activation. Its binding to DPP4 induces T-cell proliferation and NF-kappa-B activation in a T-cell receptor/CD3-dependent manner. Recruits CTNNB1 to caveolar membranes and may regulate CTNNB1-mediated signaling through the Wnt pathway. Negatively regulates TGFB1-mediated activation of SMAD2/3 by mediating the internalization of TGFBR1 from membrane rafts leading to its subsequent degradation. Binds 20(S)-hydroxycholesterol (20(S)-OHC). The chain is Caveolin-1 (CAV1) from Mustela putorius furo (European domestic ferret).